The primary structure comprises 515 residues: 2,3-bisphosphoglycerate-independent phosphoglycerate mutase (515 aa).

Mn(2+) is bound by residues aspartate 14 and serine 64. The active-site Phosphoserine intermediate is the serine 64. Substrate-binding positions include histidine 125, arginine 155–aspartate 156, arginine 187, arginine 193, arginine 263–arginine 266, and lysine 337. Residues aspartate 404, histidine 408, aspartate 445, histidine 446, and histidine 464 each coordinate Mn(2+).

It belongs to the BPG-independent phosphoglycerate mutase family. Monomer. It depends on Mn(2+) as a cofactor.

It catalyses the reaction (2R)-2-phosphoglycerate = (2R)-3-phosphoglycerate. It participates in carbohydrate degradation; glycolysis; pyruvate from D-glyceraldehyde 3-phosphate: step 3/5. In terms of biological role, catalyzes the interconversion of 2-phosphoglycerate and 3-phosphoglycerate. The polypeptide is 2,3-bisphosphoglycerate-independent phosphoglycerate mutase (Pseudomonas aeruginosa (strain UCBPP-PA14)).